A 950-amino-acid polypeptide reads, in one-letter code: Protocadherin alpha-13 (950 aa).

Residues 1–29 (MLSSWQGGPRPRQLLLWLLILAAWETGSG) form the signal peptide. Residues 30–697 (QLHYSVPEEA…GPEAALVDVN (668 aa)) lie on the Extracellular side of the membrane. Cadherin domains are found at residues 34 to 133 (SVPE…PPIF), 134 to 242 (PESK…APEF), 243 to 350 (YQSV…APEV), 351 to 455 (TITS…APAF), 456 to 565 (AQPE…APAL), and 581 to 678 (MPRS…APQA). N257 and N265 each carry an N-linked (GlcNAc...) asparagine glycan. N548 carries an N-linked (GlcNAc...) asparagine glycan. A helical transmembrane segment spans residues 698–718 (VYLIIAICAVSSLLVLTLLLY). The Cytoplasmic segment spans residues 719 to 950 (TALRCSAPPT…GNSTTDNSDQ (232 aa)). 6 PXXP repeats span residues 734–737 (PGKP), 774–777 (PSLP), 799–802 (PRQP), 832–835 (PGGP), 873–876 (PGNP), and 891–894 (PGSP). The tract at residues 734-894 (PGKPTLVCSS…PDKFIIPGSP (161 aa)) is 6 X 4 AA repeats of P-X-X-P. Disordered regions lie at residues 780–806 (LGSAEGTGQREEDSECLKEPRQPNPDW) and 829–950 (RAGP…NSDQ). The span at 787–800 (GQREEDSECLKEPR) shows a compositional bias: basic and acidic residues. The segment covering 909-923 (DKSDFITFGKKEETK) has biased composition (basic and acidic residues).

The protein resides in the cell membrane. Its function is as follows. Potential calcium-dependent cell-adhesion protein. May be involved in the establishment and maintenance of specific neuronal connections in the brain. The protein is Protocadherin alpha-13 (PCDHA13) of Homo sapiens (Human).